A 374-amino-acid chain; its full sequence is Fasciclin-like arabinogalactan protein CTB11 (374 aa).

A signal peptide spans 1–18 (MHFPALAVAGCLLSRATA). 2 consecutive FAS1 domains span residues 19 to 171 (QSLD…DANM) and 173 to 302 (LPHN…DGAL). N-linked (GlcNAc...) asparagine glycans are attached at residues N52, N72, N120, N132, and N176. A helical membrane pass occupies residues 328 to 348 (ILASHQLTLLAVLAMALVSIL).

Belongs to the fasciclin-like AGP family.

The protein localises to the membrane. Its pathway is mycotoxin biosynthesis. In terms of biological role, fasciclin-like arabinogalactan protein; part of the gene cluster that mediates the biosynthesis of cercosporin, a light-activated, non-host-selective toxin. The perylenequinone chromophore of cercosporin absorbs light energy to attain an electronically-activated triplet state and produces active oxygen species such as the hydroxyl radical, superoxide, hydrogen peroxide or singlet oxygen upon reaction with oxygen molecules. These reactive oxygen species cause damage to various cellular components including lipids, proteins and nucleic acids. The first step of cercosporin biosynthesis is performed by the polyketide synthase CTB1 which catalyzes the formation of nor-toralactone. The starter unit acyltransferase (SAT) domain of CTB1 initiates polyketide extension by the selective utilization of acetyl-CoA, which is elongated to the heptaketide in the beta-ketoacyl synthase (KS) domain by successive condensations with six malonyl units introduced by the malonyl acyltransferase (MAT) domain. The product template (PT) domain catalyzes C4-C9 and C2-C11 aldol cyclizations and dehydrations to a trihydroxynaphthalene, which is thought to be delivered to the thioesterase (TE) domain for product release. The bifunctional enzyme CTB3 then methylates nor-toralactone to toralactone before conducting an unusual oxidative aromatic ring opening. The O-methyltransferase CTB2 further methylates the nascent OH-6 of the CBT3 product, blocking further oxidation at this site before the reductase CTB6 reduces the 2-oxopropyl ketone at position C7, giving naphthalene. The FAD-dependent monooxygenase CTB5 in concert with the multicopper oxidase CTB12 are responsible for homodimerization of naphthalene with CTB7 installing the dioxepine moiety, finally producing cercosporin. The fasciclin domain-containing protein CTB11 might act with CTB5 and CTB12 whereas the roles of CTB9 and CTB10 have still to be elucidated. This Cercospora beticola (Sugarbeet leaf spot fungus) protein is Fasciclin-like arabinogalactan protein CTB11.